Reading from the N-terminus, the 306-residue chain is Epoxyqueuosine reductase (306 aa).

Aspartate 131 serves as the catalytic Proton donor. Positions 173-205 constitute a 4Fe-4S ferredoxin-type domain; sequence LDLTYDHPVTDHCGTCTACIDACPTQAIVQPYV. Positions 185, 188, 191, 195, 211, 238, 241, and 245 each coordinate [4Fe-4S] cluster.

Belongs to the QueG family. As to quaternary structure, monomer. Cob(II)alamin is required as a cofactor. It depends on [4Fe-4S] cluster as a cofactor.

It localises to the cytoplasm. It catalyses the reaction epoxyqueuosine(34) in tRNA + AH2 = queuosine(34) in tRNA + A + H2O. Its pathway is tRNA modification; tRNA-queuosine biosynthesis. Functionally, catalyzes the conversion of epoxyqueuosine (oQ) to queuosine (Q), which is a hypermodified base found in the wobble positions of tRNA(Asp), tRNA(Asn), tRNA(His) and tRNA(Tyr). This Cellulophaga algicola (strain DSM 14237 / IC166 / ACAM 630) protein is Epoxyqueuosine reductase.